The primary structure comprises 132 residues: Heat shock protein 15 homolog (132 aa).

Positions Val11–Val73 constitute an S4 RNA-binding domain. Composition is skewed to basic and acidic residues over residues Leu94 to Arg105 and Pro114 to Gln125. The tract at residues Leu94–Tyr132 is disordered.

It belongs to the HSP15 family.

In terms of biological role, may play an important role in binding of nucleic acid. More specific for RNA. This Aeromonas salmonicida protein is Heat shock protein 15 homolog (hslR).